The chain runs to 1226 residues: Phosphatidylinositol 3,4,5-trisphosphate 5-phosphatase 2B (1226 aa).

The SH2 domain occupies 6 to 102 (WYHRDISRVR…GLVAPLLYPV (97 aa)). The disordered stretch occupies residues 106–144 (SEANDESSDGDDEKPGSTFANSPPRAISPTATSPPSSSA). The segment covering 108-117 (ANDESSDGDD) has biased composition (acidic residues). A compositionally biased stretch (low complexity) spans 127 to 144 (SPPRAISPTATSPPSSSA). The NPXY motif signature appears at 906–909 (NPAY). Position 909 is a phosphotyrosine (tyrosine 909). 2 disordered regions span residues 945 to 964 (RVTG…DFTE) and 985 to 1035 (SSAA…LSGK). The segment covering 1011-1025 (HSSNSSLQLQSHKNN) has biased composition (low complexity). Residues 1163 to 1226 (GAPETVRELL…ILENLPKIWD (64 aa)) enclose the SAM domain.

Belongs to the inositol 1,4,5-trisphosphate 5-phosphatase family. In terms of processing, tyrosine phosphorylated by the members of the SRC family after exposure to a diverse array of extracellular stimuli.

Its subcellular location is the cytoplasm. The protein resides in the cytosol. The protein localises to the cytoskeleton. It localises to the membrane. It is found in the cell projection. Its subcellular location is the filopodium. The protein resides in the lamellipodium. The protein localises to the nucleus. It localises to the nucleus speckle. The enzyme catalyses a 1,2-diacyl-sn-glycero-3-phospho-(1D-myo-inositol-3,4,5-trisphosphate) + H2O = a 1,2-diacyl-sn-glycero-3-phospho-(1D-myo-inositol-3,4-bisphosphate) + phosphate. Functionally, phosphatidylinositol (PtdIns) phosphatase that specifically hydrolyzes the 5-phosphate of phosphatidylinositol-3,4,5-trisphosphate (PtdIns(3,4,5)P3) to produce PtdIns(3,4)P2, thereby negatively regulating the PI3K (phosphoinositide 3-kinase) pathways. Plays a central role in regulation of PI3K-dependent insulin signaling, although the precise molecular mechanisms and signaling pathways remain unclear. Part of a signaling pathway that regulates actin cytoskeleton remodeling. Required for the maintenance and dynamic remodeling of actin structures as well as in endocytosis, having a major impact on ligand-induced EGFR internalization and degradation. Participates in regulation of cortical and submembraneous actin. Regulates cell adhesion and cell spreading. Acts as a negative regulator of the FC-gamma-RIIA receptor (FCGR2A). Mediates signaling from the FC-gamma-RIIB receptor (FCGR2B), playing a central role in terminating signal transduction from activating immune/hematopoietic cell receptor systems. May also hydrolyze PtdIns(1,3,4,5)P4, and could thus affect the levels of the higher inositol polyphosphates like InsP6. This is Phosphatidylinositol 3,4,5-trisphosphate 5-phosphatase 2B (inppl1b) from Danio rerio (Zebrafish).